A 74-amino-acid chain; its full sequence is MDLSKKSAENVAYMVEKIKEKLKVLNFDAIKPSHFSEEWYDELKDIYEMVMRKNTFSPSEMQAIAEELGNLRKK.

The protein belongs to the UPF0435 family.

This is UPF0435 protein GWCH70_0415 from Geobacillus sp. (strain WCH70).